The following is a 296-amino-acid chain: Fructose-bisphosphate aldolase class 1 (296 aa).

Glutamate 175 acts as the Proton acceptor in catalysis. Lysine 212 (schiff-base intermediate with dihydroxyacetone-P) is an active-site residue.

It belongs to the class I fructose-bisphosphate aldolase family.

The enzyme catalyses beta-D-fructose 1,6-bisphosphate = D-glyceraldehyde 3-phosphate + dihydroxyacetone phosphate. It participates in carbohydrate degradation; glycolysis; D-glyceraldehyde 3-phosphate and glycerone phosphate from D-glucose: step 4/4. The polypeptide is Fructose-bisphosphate aldolase class 1 (Staphylococcus aureus (strain bovine RF122 / ET3-1)).